The sequence spans 248 residues: PF03932 family protein CutC (248 aa).

The protein belongs to the CutC family.

Its subcellular location is the cytoplasm. This chain is PF03932 family protein CutC, found in Porphyromonas gingivalis (strain ATCC 33277 / DSM 20709 / CIP 103683 / JCM 12257 / NCTC 11834 / 2561).